The sequence spans 341 residues: MKALSKLKAEKGIWLVDAPKPVMGHNDLLIKIKKTAICGTDMHIYNWDEWSQKTIPVPMVVGHEYVGEVVDIGQEVRGFNIGDRVSGEGHITCGHCRNCRAGRTHLCRNTSGVGVNREGSFAEYLVIPAFNAFKIPDDISDDLASIFDPFGNAVHTALSFDLVGEDVLITGAGPIGIMAAAVCRHVGARHVVITDVNEYRLELARKMGATRAVNVSKESLKDVMKELGMTEGFDVGLEMSGVPSAFHAMLDTMNHGGKIAMLGIPGGEMAIDWSKVIFKGLVIKGIYGREMFETWYKMASLIQSGLDISPIITHHFKIDDFQQGFDAMGSGQSGKVILSWD.

Zn(2+) is bound at residue Cys-38. Residues Thr-40 and His-43 each act as charge relay system in the active site. 6 residues coordinate Zn(2+): His-63, Glu-64, Cys-93, Cys-96, Cys-99, and Cys-107. NAD(+) contacts are provided by residues Ile-175, Asp-195, Arg-200, 262-264, and 286-287; these read LGI and IY.

It belongs to the zinc-containing alcohol dehydrogenase family. As to quaternary structure, homotetramer. It depends on Zn(2+) as a cofactor.

The protein resides in the cytoplasm. It catalyses the reaction L-threonine + NAD(+) = (2S)-2-amino-3-oxobutanoate + NADH + H(+). It participates in amino-acid degradation; L-threonine degradation via oxydo-reductase pathway; glycine from L-threonine: step 1/2. Catalyzes the NAD(+)-dependent oxidation of L-threonine to 2-amino-3-ketobutyrate. The sequence is that of L-threonine 3-dehydrogenase from Shewanella sp. (strain W3-18-1).